A 251-amino-acid chain; its full sequence is ATP synthase subunit a (251 aa).

5 consecutive transmembrane segments (helical) span residues 34-54 (VFLT…AASS), 93-113 (FVGT…LVPF), 130-150 (INTT…AGFS), 195-215 (LVVG…VMAL), and 216-236 (GLFT…AYIG).

This sequence belongs to the ATPase A chain family. F-type ATPases have 2 components, CF(1) - the catalytic core - and CF(0) - the membrane proton channel. CF(1) has five subunits: alpha(3), beta(3), gamma(1), delta(1), epsilon(1). CF(0) has four main subunits: a, b, b' and c.

The protein resides in the cellular thylakoid membrane. In terms of biological role, key component of the proton channel; it plays a direct role in the translocation of protons across the membrane. This chain is ATP synthase subunit a, found in Trichormus variabilis (strain ATCC 29413 / PCC 7937) (Anabaena variabilis).